The sequence spans 143 residues: Transcriptional regulator MraZ (143 aa).

SpoVT-AbrB domains lie at 5–47 (TYTP…PRAE) and 76–119 (TDEQ…DAQA).

The protein belongs to the MraZ family. As to quaternary structure, forms oligomers.

Its subcellular location is the cytoplasm. The protein resides in the nucleoid. In Mycobacterium avium (strain 104), this protein is Transcriptional regulator MraZ.